The sequence spans 598 residues: Peptidoglycan D,D-transpeptidase FtsI homolog (598 aa).

A helical membrane pass occupies residues 12–33; sequence IVLVWILFFSGSSLLLGRLFYL. The active-site Acyl-ester intermediate is S291.

Belongs to the transpeptidase family.

It localises to the plastid. Its subcellular location is the chloroplast membrane. It carries out the reaction Preferential cleavage: (Ac)2-L-Lys-D-Ala-|-D-Ala. Also transpeptidation of peptidyl-alanyl moieties that are N-acyl substituents of D-alanine.. The polypeptide is Peptidoglycan D,D-transpeptidase FtsI homolog (ftsI) (Mesostigma viride (Green alga)).